The chain runs to 196 residues: DnaA initiator-associating protein DiaA (196 aa).

Residues 34 to 196 (MVQSLLNGNK…DNTLFPHQDD (163 aa)) enclose the SIS domain.

The protein belongs to the SIS family. DiaA subfamily. In terms of assembly, homotetramer; dimer of dimers.

Functionally, required for the timely initiation of chromosomal replication via direct interactions with the DnaA initiator protein. This is DnaA initiator-associating protein DiaA from Photorhabdus laumondii subsp. laumondii (strain DSM 15139 / CIP 105565 / TT01) (Photorhabdus luminescens subsp. laumondii).